Reading from the N-terminus, the 642-residue chain is Threonine--tRNA ligase (642 aa).

In terms of domain architecture, TGS spans 1–61; the sequence is MPVITLPDGS…ETDSELSIIT (61 aa). A catalytic region spans residues 243–534; sequence DHRKIGKQLD…LIEEYAGKFP (292 aa). Cys-334, His-385, and His-511 together coordinate Zn(2+).

It belongs to the class-II aminoacyl-tRNA synthetase family. As to quaternary structure, homodimer. The cofactor is Zn(2+).

Its subcellular location is the cytoplasm. The enzyme catalyses tRNA(Thr) + L-threonine + ATP = L-threonyl-tRNA(Thr) + AMP + diphosphate + H(+). Its function is as follows. Catalyzes the attachment of threonine to tRNA(Thr) in a two-step reaction: L-threonine is first activated by ATP to form Thr-AMP and then transferred to the acceptor end of tRNA(Thr). Also edits incorrectly charged L-seryl-tRNA(Thr). This Shewanella halifaxensis (strain HAW-EB4) protein is Threonine--tRNA ligase.